Here is a 304-residue protein sequence, read N- to C-terminus: Ribonuclease BN (304 aa).

Zn(2+) is bound by residues His-63, His-65, Asp-67, His-68, His-140, Asp-211, and His-269. The active-site Proton acceptor is Asp-67.

It belongs to the RNase Z family. RNase BN subfamily. Homodimer. Zn(2+) serves as cofactor.

Zinc phosphodiesterase, which has both exoribonuclease and endoribonuclease activities. This Erwinia tasmaniensis (strain DSM 17950 / CFBP 7177 / CIP 109463 / NCPPB 4357 / Et1/99) protein is Ribonuclease BN.